Consider the following 418-residue polypeptide: MARAAFLFKTVGFGGLQNVPINDELSSHLLRAGNSPWQLTQFLDWISLGRGLATSALVPTAGSRYYQMSCLLSGTLQIPFRPNHRWGDIRFLRLVWSAPTLDGLVVAPPQVLAQPALQAQADRVYDCDDYPFLARDPRFKHRVYQQLSAVTLLNLTGFGPISYVRVDEDMWSGDVNQLLMNYFGHTFAEIAYTLCQASANRPWEYDGTYARMTQIVLSLFWLSYVGVIHQQNTYRTFYFQCNRRGDAAEVWILSCSLNHSAQIRPGNRSLFVMPTSPDWNMDVNLILSSTLTGCLCSGSQLPLIDNNSVPAVSRNIHGWTGRAGNQLHGFQVRRMVTEFCDRLRRDGVMTQAQQNQVEALADQTQQFKRDKLETWAREDDQYNQAHPNSTMFRTKPFTNAQWGRGNTGATSAAIAALI.

It belongs to the orthoreovirus sigma-1 protein family. Interacts with protein mu-NS; in viral inclusions.

The protein localises to the virion. In terms of biological role, inner capsid (core) component. The chain is Inner capsid protein sigma-2 (S2) from Reovirus type 3 (strain Dearing) (T3D).